We begin with the raw amino-acid sequence, 144 residues long: Large ribosomal subunit protein uL15 (144 aa).

Residues 1–54 (MRLNTIKPGEGSKKTAKRVGRGIGSGLGKTCGRGHKGQKSRSGGFHKVGFEGGQ) are disordered. The span at 21 to 31 (RGIGSGLGKTC) shows a compositional bias: gly residues.

It belongs to the universal ribosomal protein uL15 family. Part of the 50S ribosomal subunit.

Binds to the 23S rRNA. The polypeptide is Large ribosomal subunit protein uL15 (Dechloromonas aromatica (strain RCB)).